A 300-amino-acid chain; its full sequence is MEARVSQSLQLSSWINSDKVVRKPSGLLRFSEKWNEKPRHRVVVSCHLQPRKAAHSDRRVQLKVSCSPQNVQASVLESGCFSASIDEIETLKNKAEEVEEYLDGRCVYLVGMMGCGKTTVGRILAETLGYSFFDCDRLIEQAVGGITVAEIFELRGESFFRDNETEVLHKLSLMHRLVVSTGGGAVVRPINWRHMHKGISVWLDVPLEALAKRITTEGTKSRPLLHEESGDVYDTTLKRLTTLMETRGENYANASARVSLENIALKREKDVCHITPAEITLEVLIQIENFLKTQKSVVVL.

A chloroplast-targeting transit peptide spans 1–65 (MEARVSQSLQ…SDRRVQLKVS (65 aa)). Residue 111-118 (GMMGCGKT) participates in ATP binding. Thr-118 provides a ligand contact to Mg(2+). Positions 136, 161, and 183 each coordinate substrate. Arg-222 serves as a coordination point for ATP.

Belongs to the shikimate kinase family. Requires Mg(2+) as cofactor.

The protein localises to the plastid. The protein resides in the chloroplast. It catalyses the reaction shikimate + ATP = 3-phosphoshikimate + ADP + H(+). It participates in metabolic intermediate biosynthesis; chorismate biosynthesis; chorismate from D-erythrose 4-phosphate and phosphoenolpyruvate: step 5/7. In terms of biological role, catalyzes the specific phosphorylation of the 3-hydroxyl group of shikimic acid using ATP as a cosubstrate. In Solanum lycopersicum (Tomato), this protein is Shikimate kinase, chloroplastic (SK).